The primary structure comprises 560 residues: Putative transport protein VSAL_I2029 (560 aa).

5 consecutive transmembrane segments (helical) span residues 14–34 (ILLL…KIGS), 37–57 (LGSS…GYTF), 66–86 (FMLF…GIFL), 94–114 (LLVL…GYYF), and 161–181 (NLSV…ILLA). 2 consecutive RCK C-terminal domains span residues 203–292 (RGIG…FRNG) and 293–376 (KEVF…KIGF). Transmembrane regions (helical) follow at residues 386–406 (LLAF…TMSF), 409–429 (VTFG…LGFL), 451–471 (GLLV…IEYF), 478–498 (VLAA…LVGA), and 539–559 (AGTY…MILL).

It belongs to the AAE transporter (TC 2.A.81) family. YbjL subfamily.

The protein localises to the cell membrane. This chain is Putative transport protein VSAL_I2029, found in Aliivibrio salmonicida (strain LFI1238) (Vibrio salmonicida (strain LFI1238)).